A 324-amino-acid chain; its full sequence is FCS-Like Zinc finger 11 (324 aa).

An FLZ-type zinc finger spans residues 266-309; the sequence is NFLGICNFCNKKLGGGDDIYMYREKSFCSEECRSEEMMIDEEDL.

The protein belongs to the FLZ family. In terms of assembly, interacts with KIN10 and KIN11 via its FLZ-type zinc finger domain. Forms heterodimer with FLZ2 in vitro.

The protein resides in the cytoplasm. It is found in the nucleus. Its function is as follows. May act as an adapter to facilitate the interaction of SnRK1 complex with effector proteins, conferring tissue- and stimulus-type specific differences in the SnRK1 regulation pathway. The polypeptide is FCS-Like Zinc finger 11 (Arabidopsis thaliana (Mouse-ear cress)).